Reading from the N-terminus, the 449-residue chain is MDSDDLQVFQNELICCICVNYFIDPVTIDCGHSFCRPCLCLCSEEGRAPMRCPSCRKTSEKPNFNTNLVLKKLSSLARQTRPQNINSSDNICVLHEETKELFCEADKRLLCGPCSESPEHMAHSHSPIGWAAEECREKLIKEMDYLWEINQETRNNLNQETSTFHSLKDYVSVRKRIITIQYQKMPIFLDEEEQRHLQALEREAEELFQQLQDSQVRMTQHLERMKDMYRELWETCHMPDVVLLQDVRNVSARTDLAQMQKPQPVNPELTSWCITGVLDMLNNFRVDSALSTEMIPCYISLSEDVRYVIFGDDHLSAPTDPQGVDSFAVWGAQAFTSGKHYWEVDVTLSSNWILGVCRDSRTADANFVIDSDERFFLISSKRSNHYSLSTNSPPLIQYVQRPLGRVGVFLDYDNGSVSFFDVSKGSLIYGFPPSSFSSPLRPFFCFGCT.

The RING-type zinc-finger motif lies at 15–56 (CCICVNYFIDPVTIDCGHSFCRPCLCLCSEEGRAPMRCPSCR). The segment at 87-128 (SSDNICVLHEETKELFCEADKRLLCGPCSESPEHMAHSHSPI) adopts a B box-type zinc-finger fold. Zn(2+)-binding residues include Cys-92, His-95, Cys-114, and His-120. Residues 189–225 (LDEEEQRHLQALEREAEELFQQLQDSQVRMTQHLERM) are a coiled coil. Positions 268–449 (ELTSWCITGV…LRPFFCFGCT (182 aa)) constitute a B30.2/SPRY domain.

It belongs to the TRIM/RBCC family.

In Homo sapiens (Human), this protein is Tripartite motif-containing protein 64B (TRIM64B).